The primary structure comprises 237 residues: Uridylate kinase (237 aa).

Residue 11-14 coordinates ATP; the sequence is KLSG. Gly-53 lines the UMP pocket. ATP contacts are provided by Gly-54 and Arg-58. Residues Asp-73 and 134 to 141 contribute to the UMP site; that span reads TGNPFFTT. ATP is bound by residues Thr-161, Tyr-167, and Asp-170.

It belongs to the UMP kinase family. As to quaternary structure, homohexamer.

The protein localises to the cytoplasm. The catalysed reaction is UMP + ATP = UDP + ADP. It participates in pyrimidine metabolism; CTP biosynthesis via de novo pathway; UDP from UMP (UMPK route): step 1/1. Inhibited by UTP. In terms of biological role, catalyzes the reversible phosphorylation of UMP to UDP. The sequence is that of Uridylate kinase from Paraburkholderia xenovorans (strain LB400).